The chain runs to 346 residues: UPF0718 protein YraQ (346 aa).

The next 9 helical transmembrane spans lie at 12 to 32, 71 to 91, 113 to 133, 146 to 166, 167 to 187, 223 to 243, 260 to 280, 296 to 316, and 326 to 346; these read PIQW…LWYV, MIYF…GSLI, LLGT…APVA, ALAF…FMGF, VLGW…VLLI, ALWT…LVLG, SLMW…PTAA, APAL…LIML, and WLTG…ALLF.

This sequence belongs to the UPF0718 family.

It is found in the cell membrane. The polypeptide is UPF0718 protein YraQ (yraQ) (Escherichia coli (strain K12)).